Here is a 364-residue protein sequence, read N- to C-terminus: Salivary endonuclease (364 aa).

An N-terminal signal peptide occupies residues 1–24; the sequence is MSSFFLSISPLVLALFHVVVQVCS. A glycan (N-linked (GlcNAc...) asparagine) is linked at Asn285.

It belongs to the DNA/RNA non-specific endonuclease family. The cofactor is Mg(2+). As to expression, saliva (at protein level). Female salivary gland.

Its subcellular location is the secreted. Its function is as follows. Hydrolyzes double-stranded DNA with no sequence specificity. Does not cleave ssDNA and RNA. May facilitate blood meal intake by lowering the local viscosity created by the release of host DNA. The protein is Salivary endonuclease of Culex quinquefasciatus (Southern house mosquito).